The following is a 921-amino-acid chain: Phototropin-1A (921 aa).

The segment covering 1–11 (MASKGTEGGHG) has biased composition (gly residues). Disordered regions lie at residues 1-59 (MASK…SPFL) and 88-118 (TGLP…QSAA). The span at 40–51 (SSASSFRTAAAA) shows a compositional bias: low complexity. Positions 97–117 (RPSSGSARTSSEDNPQQQQSA) are enriched in polar residues. The PAS 1 domain occupies 123–197 (VSEELRAALS…KIRQSLANGS (75 aa)). Residues 172–177 (NCRFLQ), R190, N205, N215, and Q236 contribute to the FMN site. Position 173 is an S-4a-FMN cysteine (C173). In terms of domain architecture, PAC 1 spans 197–251 (SNYCGRILNYKKDGTPFWNLLTIAPIKDEDGRLLKFIGMQVEVSKYTEGKKDTVV). The segment covering 286 to 295 (RSLSESSNNT) has biased composition (polar residues). Disordered stretches follow at residues 286–347 (RSLS…NRTR) and 364–390 (SVEK…ESFE). Basic and acidic residues-rich tracts occupy residues 312–321 (PSKRSSESGS) and 364–376 (SVEK…RDED). Positions 400–473 (RGIDLATTLE…RKIRDAIDNQ (74 aa)) constitute a PAS 2 domain. FMN contacts are provided by residues 449–454 (NCRFLQ), R467, N482, N492, and Q513. C450 is subject to S-4a-FMN cysteine. The PAC 2 domain occupies 474–528 (AEVTVQLINYTKSGKKFWNLFHLQPMRDQKGDVQYFIGVQLDGTEHVQDDAAKEG). The region spanning 594–881 (FRPVKPLGSG…ANEIKGHPFF (288 aa)) is the Protein kinase domain. Residues 600 to 608 (LGSGDTGSV) and K623 contribute to the ATP site. The Proton acceptor role is filled by D719.

This sequence belongs to the protein kinase superfamily. Ser/Thr protein kinase family. As to quaternary structure, homodimer. It depends on FMN as a cofactor. In terms of processing, autophosphorylated in response to blue light irradiation. 2 molecules of FMN bind covalently to cysteines after exposure to blue light and are reversed in the dark. In terms of tissue distribution, highly expressed in coleoptiles of dark-grown seedlings.

It catalyses the reaction L-seryl-[protein] + ATP = O-phospho-L-seryl-[protein] + ADP + H(+). The catalysed reaction is L-threonyl-[protein] + ATP = O-phospho-L-threonyl-[protein] + ADP + H(+). In terms of biological role, protein kinase that acts as a blue light photoreceptor in a signal-transduction pathway for phototropic responses. Regulates a wide range of physiological activities in plants that maximize the efficiency of photosynthesis, such as chloroplast relocations, stomata opening, and leaf expansion. The polypeptide is Phototropin-1A (PHOT1A) (Oryza sativa subsp. japonica (Rice)).